Here is a 311-residue protein sequence, read N- to C-terminus: Probable cobalamin biosynthesis protein CobD (311 aa).

4 helical membrane-spanning segments follow: residues 53–73, 76–96, 157–177, and 288–308; these read FIFG…AIYG, ILIN…FLIS, DSII…AFIY, and FSID…YVIF.

This sequence belongs to the CobD/CbiB family.

Its subcellular location is the cell membrane. The protein operates within cofactor biosynthesis; adenosylcobalamin biosynthesis. In terms of biological role, converts cobyric acid to cobinamide by the addition of aminopropanol on the F carboxylic group. This is Probable cobalamin biosynthesis protein CobD from Methanococcus aeolicus (strain ATCC BAA-1280 / DSM 17508 / OCM 812 / Nankai-3).